The chain runs to 950 residues: Glycine dehydrogenase (decarboxylating) (950 aa).

Lys-698 bears the N6-(pyridoxal phosphate)lysine mark.

It belongs to the GcvP family. In terms of assembly, the glycine cleavage system is composed of four proteins: P, T, L and H. The cofactor is pyridoxal 5'-phosphate.

It carries out the reaction N(6)-[(R)-lipoyl]-L-lysyl-[glycine-cleavage complex H protein] + glycine + H(+) = N(6)-[(R)-S(8)-aminomethyldihydrolipoyl]-L-lysyl-[glycine-cleavage complex H protein] + CO2. Functionally, the glycine cleavage system catalyzes the degradation of glycine. The P protein binds the alpha-amino group of glycine through its pyridoxal phosphate cofactor; CO(2) is released and the remaining methylamine moiety is then transferred to the lipoamide cofactor of the H protein. The sequence is that of Glycine dehydrogenase (decarboxylating) from Neisseria meningitidis serogroup C (strain 053442).